The following is a 138-amino-acid chain: Large ribosomal subunit protein uL16 (138 aa).

Residues 1-19 (MLIPKRVKYRRQHRPHRSG) are compositionally biased toward basic residues. A disordered region spans residues 1 to 24 (MLIPKRVKYRRQHRPHRSGVSKGG).

It belongs to the universal ribosomal protein uL16 family. As to quaternary structure, part of the 50S ribosomal subunit.

In terms of biological role, binds 23S rRNA and is also seen to make contacts with the A and possibly P site tRNAs. The chain is Large ribosomal subunit protein uL16 from Corynebacterium jeikeium (strain K411).